We begin with the raw amino-acid sequence, 341 residues long: MTSELEALRQETEQLKNQIREARKAAADTTLAMATANVEPVGRIQMRTRRTLRGHLAKIYAMHWASDSRNLVSASQDGKLIVWDGYTTNKVHAIPLRSSWVMTCAYAPSGNYVACGGLDNICSIYSLKTREGNVRVSRELPGHTGYLSCCRFIDDNQIVTSSGDMTCALWNIETGNQITSFGGHTGDVMSLSLAPDMRTFVSGACDASAKLFDIRDGICKQTFTGHESDINAITYFPNGFAFATGSDDATCRLFDIRADQEIGMYSHDNIICGITSVAFSKSGRLLLGGYDDFNCNVWDVLKQERAGVLAGHDNRVSCLGVTEDGMAVATGSWDSFLKIWN.

WD repeat units follow at residues 54-84 (GHLA…IVWD), 96-126 (LRSS…SIYS), 142-171 (GHTG…ALWN), 183-213 (GHTG…KLFD), 225-255 (GHES…RLFD), 269-299 (NIIC…NVWD), and 311-341 (GHDN…KIWN).

It belongs to the WD repeat G protein beta family. G proteins are composed of 3 units, alpha, beta and gamma.

In terms of biological role, guanine nucleotide-binding proteins (G proteins) are involved as a modulator or transducer in various transmembrane signaling systems. The beta and gamma chains are required for the GTPase activity, for replacement of GDP by GTP, and for G protein-effector interaction. The protein is Guanine nucleotide-binding protein subunit beta of Loligo forbesii (Veined squid).